We begin with the raw amino-acid sequence, 168 residues long: Cytochrome c-type biogenesis protein CcmE (168 aa).

Residues 1–23 (MTTAPSGLPGTPLPPARRRERPR) are Cytoplasmic-facing. Residues 24 to 44 (WPLLVAGAAVLGLIGYMVLGN) traverse the membrane as a helical; Signal-anchor for type II membrane protein segment. Residues 45-168 (ANSNLVYYVL…KILNDQSTKP (124 aa)) are Extracellular-facing. Positions 137 and 141 each coordinate heme. Residues 145–168 (DSKGEGQYSQDDLKKILNDQSTKP) form a disordered region.

Belongs to the CcmE/CycJ family.

It localises to the cell membrane. Heme chaperone required for the biogenesis of c-type cytochromes. Transiently binds heme delivered by CcmC and transfers the heme to apo-cytochromes in a process facilitated by CcmF and CcmH. In Deinococcus radiodurans (strain ATCC 13939 / DSM 20539 / JCM 16871 / CCUG 27074 / LMG 4051 / NBRC 15346 / NCIMB 9279 / VKM B-1422 / R1), this protein is Cytochrome c-type biogenesis protein CcmE.